Reading from the N-terminus, the 904-residue chain is Shieldin complex subunit 2 (904 aa).

Residues 1–60 (MSGGSQVHIFWGAPVAPLKMTVSQDTASLMSVADPWKKIHLLYSQHSLYLKDEKQHKNLE) are sufficient for interaction with SHLD3 and MAD2L2. Residues 1-568 (MSGGSQVHIF…AYVSSKHSYL (568 aa)) are interaction with ASTE1. Residues 721 to 891 (KCSGVVLIQA…LQQDFSLLDF (171 aa)) are mediates interaction with SHLD1.

The protein belongs to the SHLD2 family. Component of the shieldin complex, consisting of SHLD1, SHLD2, SHLD3 and MAD2L2/REV7. Within the complex, SHLD2 forms a scaffold which interacts with a SHLD3-MAD2L2 subcomplex via its N-terminus, and with SHLD1 via its C-terminus. Interacts with TP53BP1. Interacts with RIF1. Interacts with ASTE1.

It is found in the chromosome. Its function is as follows. Component of the shieldin complex, which plays an important role in repair of DNA double-stranded breaks (DSBs). During G1 and S phase of the cell cycle, the complex functions downstream of TP53BP1 to promote non-homologous end joining (NHEJ) and suppress DNA end resection. Mediates various NHEJ-dependent processes including immunoglobulin class-switch recombination, and fusion of unprotected telomeres. The polypeptide is Shieldin complex subunit 2 (Pongo abelii (Sumatran orangutan)).